Reading from the N-terminus, the 151-residue chain is Large ribosomal subunit protein uL13 (151 aa).

Positions 129 to 151 (SNHPHQAQKPETLTINTIPGGNN) are disordered.

Belongs to the universal ribosomal protein uL13 family. Part of the 50S ribosomal subunit.

Its function is as follows. This protein is one of the early assembly proteins of the 50S ribosomal subunit, although it is not seen to bind rRNA by itself. It is important during the early stages of 50S assembly. The protein is Large ribosomal subunit protein uL13 of Gloeothece citriformis (strain PCC 7424) (Cyanothece sp. (strain PCC 7424)).